The following is a 667-amino-acid chain: Leucine-rich repeat-containing protein 43 (667 aa).

Polar residues predominate over residues 1-11; sequence METSESSTSDY. A disordered region spans residues 1-24; that stretch reads METSESSTSDYRQTEGEGEGVPGT. LRR repeat units follow at residues 148-169, 170-191, 194-213, and 221-242; these read KLEELVLSANKIEEIDANNLPP, TLKVLELYGNLIASMECLCSAP, RLQHLGLGHNKLLGPLESLY, and QLVSLDLGFNNLTDLQNMILGL. The LRRCT domain maps to 256 to 294; that stretch reads NPLSLVPYYRGFTIDSLAHLCVLDDITVSPNEKHQFRGL. Disordered regions lie at residues 374–407, 533–570, and 616–640; these read FSGTDEEDQQEDPLDGRHRHRGRQRFHPGSTEEM, ESPLPAKKGKDNNKKKEPAKDKVHKKKKEPPRELRQDP, and SKKVKKSLKKDRSKTVPPTMESGYQ. Positions 377–386 are enriched in acidic residues; that stretch reads TDEEDQQEDP. A compositionally biased stretch (basic residues) spans 390 to 399; the sequence is RHRHRGRQRF. Over residues 540–553 the composition is skewed to basic and acidic residues; sequence KGKDNNKKKEPAKD. The span at 617-627 shows a compositional bias: basic residues; sequence KKVKKSLKKDR.

In Mus musculus (Mouse), this protein is Leucine-rich repeat-containing protein 43 (Lrrc43).